We begin with the raw amino-acid sequence, 313 residues long: Acetaldehyde dehydrogenase 3 (313 aa).

13-16 (SGNI) is a binding site for NAD(+). The active-site Acyl-thioester intermediate is the Cys133. NAD(+)-binding positions include 164-172 (SAGPGTRAN) and Asn291.

It belongs to the acetaldehyde dehydrogenase family.

It catalyses the reaction acetaldehyde + NAD(+) + CoA = acetyl-CoA + NADH + H(+). The protein is Acetaldehyde dehydrogenase 3 of Paraburkholderia xenovorans (strain LB400).